The chain runs to 350 residues: Protein SGT1 homolog A (350 aa).

TPR repeat units lie at residues 2–35, 37–69, and 71–103; these read AKELADKAKEAFVDDDFDVAVDLYSKAIDLDPNC, EFFADRAQAYIKLESFTEAVADANKAIELDPSL, and KAYLRKGTACMKLEEYRTAKTALEKGASITPSE. The 90-residue stretch at 149–238 folds into the CS domain; sequence TAKYRHEYYQ…ADIITWASLE (90 aa). The SGS domain occupies 260–350; sequence AYPSSKKVKD…DGMELKKWEI (91 aa).

This sequence belongs to the SGT1 family. In terms of assembly, interacts with RAR1. Forms a ternary complex with RAR1 and barley HSP90.

Its function is as follows. Functions in R gene-mediated resistance, but participates in a lower extent than SGT1B to RPP5-mediated resistance. Not required for RPM1, RPS2, RPS4 and RPS5-mediated resistance. Probably required for SCF-mediated ubiquitination, by coupling HSP90 to SCF complex for ubiquitination of HSP90 client proteins. The polypeptide is Protein SGT1 homolog A (SGT1A) (Arabidopsis thaliana (Mouse-ear cress)).